The following is a 329-amino-acid chain: Malate dehydrogenase (329 aa).

Position 12 to 18 (Gly12 to Cys18) interacts with NAD(+). The substrate site is built by Arg95 and Arg101. NAD(+) contacts are provided by residues Asn108, Gln115, and Val132–Asn134. Substrate-binding residues include Asn134 and Arg165. His190 functions as the Proton acceptor in the catalytic mechanism.

Belongs to the LDH/MDH superfamily. MDH type 2 family. In terms of assembly, homodimer.

The enzyme catalyses (S)-malate + NAD(+) = oxaloacetate + NADH + H(+). Its function is as follows. Catalyzes the reversible oxidation of malate to oxaloacetate. This Aquaspirillum arcticum protein is Malate dehydrogenase.